The sequence spans 430 residues: Adenylosuccinate synthetase (430 aa).

Residues 17–23 (GDEGKGK) and 45–47 (GHT) contribute to the GTP site. Catalysis depends on Asp18, which acts as the Proton acceptor. Positions 18 and 45 each coordinate Mg(2+). IMP is bound by residues 18–21 (DEGK), 43–46 (NAGH), Thr139, Arg153, Asn229, Thr244, and Arg308. Catalysis depends on His46, which acts as the Proton donor. Residue 304 to 310 (TVTGRRR) coordinates substrate. Residues Arg310, 336-338 (KLD), and 418-420 (GVG) contribute to the GTP site.

Belongs to the adenylosuccinate synthetase family. Homodimer. The cofactor is Mg(2+).

It is found in the cytoplasm. The enzyme catalyses IMP + L-aspartate + GTP = N(6)-(1,2-dicarboxyethyl)-AMP + GDP + phosphate + 2 H(+). It participates in purine metabolism; AMP biosynthesis via de novo pathway; AMP from IMP: step 1/2. In terms of biological role, plays an important role in the de novo pathway and in the salvage pathway of purine nucleotide biosynthesis. Catalyzes the first committed step in the biosynthesis of AMP from IMP. In Cryptococcus neoformans var. neoformans serotype D (strain JEC21 / ATCC MYA-565) (Filobasidiella neoformans), this protein is Adenylosuccinate synthetase.